A 621-amino-acid chain; its full sequence is MAKVVGIDLGTTNSVIAVMEGGKPTVIPNKEGLRTTPSVVAYTKKQDKLVGQIAKRQAVMNPENTFYSVKRFIGRKKDELGDELKQSSYNVKTDINSNVKLECPALSKDFAPEEISAQVLRKLVEDASTYLGQQVTQAVITVPAYFNDSQRQATKDAGQIAGLDVLRIINEPTAASLSYGLDKKNNETILVFDLGGGTFDVSILEVGDGVFEVLSTSGDTHLGGDDFDRKIVEWLIHEFSHDEGINLGKDRQALQRLTEAAEKAKMELSSLAQTDINLPFITSTDTGPKHLEKNITRAKFEYLCQDLINRCEIPVNNALKDAQLSSGNIDEIVLVGGSTRIPAIQQLVKKMIGKDPNQSVNPDEVVAIGAAVQAGVLAGEVKDILLLDVTPLSLGVETLGGVMTKIIDRNTTVPTKKSEIFSTAVDNQPNVEIHVLQGEREFTKDNKSLGTFRLDGIMPAPRGVPQIEVIFDIDANGILSVKAKDKGTGKEQSITITGASTLPKEEVEKLVKEAEENSELDKHKREQIDLKNQADALCYQSQNQINELKDKISEDEKQNVQKLIDSLKLSIQEDDYEKIKDIQNQLQQVMMNIGKQVYSSTQQDNSKTEDGSVIDTNSKEA.

A disordered region spans residues 597-621 (VYSSTQQDNSKTEDGSVIDTNSKEA).

Belongs to the heat shock protein 70 family.

Its subcellular location is the plastid. The protein localises to the chloroplast. Acts as a chaperone. The polypeptide is Chaperone protein dnaK (Gracilaria tenuistipitata var. liui (Red alga)).